The sequence spans 481 residues: Proline--tRNA ligase (481 aa).

Belongs to the class-II aminoacyl-tRNA synthetase family. ProS type 3 subfamily. As to quaternary structure, homodimer.

The protein resides in the cytoplasm. It carries out the reaction tRNA(Pro) + L-proline + ATP = L-prolyl-tRNA(Pro) + AMP + diphosphate. In terms of biological role, catalyzes the attachment of proline to tRNA(Pro) in a two-step reaction: proline is first activated by ATP to form Pro-AMP and then transferred to the acceptor end of tRNA(Pro). The polypeptide is Proline--tRNA ligase (Pelodictyon phaeoclathratiforme (strain DSM 5477 / BU-1)).